The chain runs to 425 residues: MREQDFLNHFLKKGYFKKHAKAVLALSGGLDSMFLFKVLSTYQKELEIELILAHVNHKQRIESDWEEKELRKLAAEAELPIYISNFSGEFSEARARNFRYDFFQEVMKKTGATALVTAHHADDQVETILMRLIRGTRLRYLSGIKEKQVVGEIEIIRPFLHFQKKDFPSIFHFEDTSNQENHYFRNRIRNSYLPELEKENPRFRDAILGIGNEILDYDLAIAELSNNIDVENLQQLFSYSESTQRVLLQTYLNRFPDLNLTKAQFAEVQQILKSKSQYRHPIKNGYELIKEYQQFQICKISPQADEKEDELVLHYQNQVAYQGYLFSFGLPLEGELIQQIPVSRETSIHIRHRKTGDVLIQNGHRKKLRRLFIDLKIPMEKRNSALIIEQFGEIVSILGIATNNLSKKTKNDIMNTVLYIEKIDR.

Residue 27–32 (SGGLDS) participates in ATP binding.

Belongs to the tRNA(Ile)-lysidine synthase family.

It localises to the cytoplasm. It catalyses the reaction cytidine(34) in tRNA(Ile2) + L-lysine + ATP = lysidine(34) in tRNA(Ile2) + AMP + diphosphate + H(+). Functionally, ligates lysine onto the cytidine present at position 34 of the AUA codon-specific tRNA(Ile) that contains the anticodon CAU, in an ATP-dependent manner. Cytidine is converted to lysidine, thus changing the amino acid specificity of the tRNA from methionine to isoleucine. This is tRNA(Ile)-lysidine synthase from Streptococcus pneumoniae serotype 19F (strain G54).